The chain runs to 400 residues: Calsequestrin-2 (400 aa).

An N-terminal signal peptide occupies residues 1-19 (MKRTHLFIVGVYVLSSCRA). Y282 is modified (phosphotyrosine). N335 carries N-linked (GlcNAc...) asparagine glycosylation. The tract at residues 365–400 (VLSGKINTEDDDDEDDDDDNSDEEDNDDSDDDDDDE) is disordered. The segment covering 373 to 400 (EDDDDEDDDDDNSDEEDNDDSDDDDDDE) has biased composition (acidic residues).

This sequence belongs to the calsequestrin family. Monomer, homodimer and homooligomer. Mostly monomeric in the absence of calcium. Forms higher oligomers in a calcium-dependent manner. Dimers associate to form tetramers, that then form linear homomer chains. Interacts with ASPH and TRDN. Phosphorylation in the C-terminus, probably by CK2, moderately increases calcium buffering capacity. Post-translationally, N-glycosylated.

It localises to the sarcoplasmic reticulum lumen. In terms of biological role, calsequestrin is a high-capacity, moderate affinity, calcium-binding protein and thus acts as an internal calcium store in muscle. Calcium ions are bound by clusters of acidic residues at the protein surface, especially at the interface between subunits. Can bind around 60 Ca(2+) ions. Regulates the release of lumenal Ca(2+) via the calcium release channel RYR2; this plays an important role in triggering muscle contraction. Plays a role in excitation-contraction coupling in the heart and in regulating the rate of heart beats. This chain is Calsequestrin-2 (CASQ2), found in Pongo abelii (Sumatran orangutan).